Here is a 271-residue protein sequence, read N- to C-terminus: Catechol O-methyltransferase (271 aa).

The Cytoplasmic segment spans residues 1–6 (MPEAPP). The chain crosses the membrane as a helical; Signal-anchor for type II membrane protein span at residues 7-26 (LLLAAVLLGLVLLVVLLLLL). Over 27–271 (RHWGWGLCLI…YKGPGSEAGP (245 aa)) the chain is Extracellular. Residues Val92, Glu114, Ser122, Glu140, Ile141, 167–170 (GASQ), Ser169, and Asp191 contribute to the S-adenosyl-L-methionine site. Asp191 serves as a coordination point for Mg(2+). Lys194 serves as a coordination point for substrate. Positions 219 and 220 each coordinate Mg(2+). Residues Asn220 and Glu249 each coordinate substrate. Ser267 carries the phosphoserine modification.

It belongs to the class I-like SAM-binding methyltransferase superfamily. Cation-dependent O-methyltransferase family. Requires Mg(2+) as cofactor. Post-translationally, the N-terminus is blocked. As to expression, brain, liver, placenta, lymphocytes and erythrocytes.

The protein resides in the cytoplasm. Its subcellular location is the cell membrane. The catalysed reaction is a catechol + S-adenosyl-L-methionine = a guaiacol + S-adenosyl-L-homocysteine + H(+). It carries out the reaction 2-hydroxyestrone + S-adenosyl-L-methionine = 2-hydroxy-3-methoxy-estrone + S-adenosyl-L-homocysteine + H(+). It catalyses the reaction 4-hydroxyestrone + S-adenosyl-L-methionine = 4-methoxyestrone + S-adenosyl-L-homocysteine + H(+). The enzyme catalyses 2-hydroxyestrone + S-adenosyl-L-methionine = 2-methoxyestrone + S-adenosyl-L-homocysteine + H(+). The catalysed reaction is 4-hydroxy-17beta-estradiol + S-adenosyl-L-methionine = 4-methoxy-17beta-estradiol + S-adenosyl-L-homocysteine + H(+). It carries out the reaction 2-hydroxy-17beta-estradiol + S-adenosyl-L-methionine = 2-hydroxy-3-methoxy-17beta-estradiol + S-adenosyl-L-homocysteine + H(+). It catalyses the reaction 2-hydroxy-17beta-estradiol + S-adenosyl-L-methionine = 2-methoxy-17beta-estradiol + S-adenosyl-L-homocysteine + H(+). Its function is as follows. Catalyzes the O-methylation, and thereby the inactivation, of catecholamine neurotransmitters and catechol hormones. Also shortens the biological half-lives of certain neuroactive drugs, like L-DOPA, alpha-methyl DOPA and isoproterenol. The sequence is that of Catechol O-methyltransferase from Homo sapiens (Human).